The sequence spans 215 residues: Large ribosomal subunit protein uL4 (215 aa).

A disordered region spans residues 46 to 76 (TAKSKNRAEVSGGGRKPWAQKGGGRARAGSI). Residues 56–71 (SGGGRKPWAQKGGGRA) show a composition bias toward gly residues.

This sequence belongs to the universal ribosomal protein uL4 family. Part of the 50S ribosomal subunit.

One of the primary rRNA binding proteins, this protein initially binds near the 5'-end of the 23S rRNA. It is important during the early stages of 50S assembly. It makes multiple contacts with different domains of the 23S rRNA in the assembled 50S subunit and ribosome. Its function is as follows. Forms part of the polypeptide exit tunnel. This Helicobacter acinonychis (strain Sheeba) protein is Large ribosomal subunit protein uL4.